The sequence spans 179 residues: Large ribosomal subunit protein uL5 (179 aa).

It belongs to the universal ribosomal protein uL5 family. In terms of assembly, part of the 50S ribosomal subunit; part of the 5S rRNA/L5/L18/L25 subcomplex. Contacts the 5S rRNA and the P site tRNA. Forms a bridge to the 30S subunit in the 70S ribosome.

This is one of the proteins that bind and probably mediate the attachment of the 5S RNA into the large ribosomal subunit, where it forms part of the central protuberance. In the 70S ribosome it contacts protein S13 of the 30S subunit (bridge B1b), connecting the 2 subunits; this bridge is implicated in subunit movement. Contacts the P site tRNA; the 5S rRNA and some of its associated proteins might help stabilize positioning of ribosome-bound tRNAs. This Synechococcus sp. (strain RCC307) protein is Large ribosomal subunit protein uL5.